The primary structure comprises 100 residues: Integration host factor subunit alpha (100 aa).

The disordered stretch occupies residues 54–73; that stretch reads DLRDKRQRPGRNPKTGEEIP.

This sequence belongs to the bacterial histone-like protein family. In terms of assembly, heterodimer of an alpha and a beta chain.

In terms of biological role, this protein is one of the two subunits of integration host factor, a specific DNA-binding protein that functions in genetic recombination as well as in transcriptional and translational control. The protein is Integration host factor subunit alpha of Pseudomonas savastanoi pv. phaseolicola (strain 1448A / Race 6) (Pseudomonas syringae pv. phaseolicola (strain 1448A / Race 6)).